Reading from the N-terminus, the 462-residue chain is Cysteine--tRNA ligase (462 aa).

Cys28 is a Zn(2+) binding site. The 'HIGH' region signature appears at 30–40 (ITVYDLCHIGH). 3 residues coordinate Zn(2+): Cys210, His235, and Glu239. The 'KMSKS' region motif lies at 267 to 271 (KMSKS). An ATP-binding site is contributed by Lys270.

Belongs to the class-I aminoacyl-tRNA synthetase family. Monomer. The cofactor is Zn(2+).

Its subcellular location is the cytoplasm. It catalyses the reaction tRNA(Cys) + L-cysteine + ATP = L-cysteinyl-tRNA(Cys) + AMP + diphosphate. The chain is Cysteine--tRNA ligase from Erwinia tasmaniensis (strain DSM 17950 / CFBP 7177 / CIP 109463 / NCPPB 4357 / Et1/99).